A 383-amino-acid chain; its full sequence is Mannitol-1-phosphate 5-dehydrogenase (383 aa).

Position 3–14 (3–14) interacts with NAD(+); the sequence is ALHFGAGNIGRG.

It belongs to the mannitol dehydrogenase family.

It catalyses the reaction D-mannitol 1-phosphate + NAD(+) = beta-D-fructose 6-phosphate + NADH + H(+). In Serratia proteamaculans (strain 568), this protein is Mannitol-1-phosphate 5-dehydrogenase.